A 227-amino-acid polypeptide reads, in one-letter code: Cytochrome c oxidase subunit 2 (227 aa).

Over 1-14 the chain is Mitochondrial intermembrane; it reads MAYPFQLGLQDATS. A helical membrane pass occupies residues 15–45; that stretch reads PIMEELLHFHDHTLMIVFLISSLVLYIISLM. Residues 46–59 are Mitochondrial matrix-facing; sequence LTTKLTHTSTMDAQ. The helical transmembrane segment at 60–87 threads the bilayer; it reads EVETVWTILPAIILILIALPSLRILYMM. Topologically, residues 88-227 are mitochondrial intermembrane; that stretch reads DEINNPSLTV…YFETWSAVMV (140 aa). The Cu cation site is built by histidine 161, cysteine 196, glutamate 198, cysteine 200, histidine 204, and methionine 207. A Mg(2+)-binding site is contributed by glutamate 198. Position 218 is a phosphotyrosine (tyrosine 218).

It belongs to the cytochrome c oxidase subunit 2 family. Component of the cytochrome c oxidase (complex IV, CIV), a multisubunit enzyme composed of 14 subunits. The complex is composed of a catalytic core of 3 subunits MT-CO1, MT-CO2 and MT-CO3, encoded in the mitochondrial DNA, and 11 supernumerary subunits COX4I, COX5A, COX5B, COX6A, COX6B, COX6C, COX7A, COX7B, COX7C, COX8 and NDUFA4, which are encoded in the nuclear genome. The complex exists as a monomer or a dimer and forms supercomplexes (SCs) in the inner mitochondrial membrane with NADH-ubiquinone oxidoreductase (complex I, CI) and ubiquinol-cytochrome c oxidoreductase (cytochrome b-c1 complex, complex III, CIII), resulting in different assemblies (supercomplex SCI(1)III(2)IV(1) and megacomplex MCI(2)III(2)IV(2)). Found in a complex with TMEM177, COA6, COX18, COX20, SCO1 and SCO2. Interacts with TMEM177 in a COX20-dependent manner. Interacts with COX20. Interacts with COX16. It depends on Cu cation as a cofactor.

The protein localises to the mitochondrion inner membrane. It catalyses the reaction 4 Fe(II)-[cytochrome c] + O2 + 8 H(+)(in) = 4 Fe(III)-[cytochrome c] + 2 H2O + 4 H(+)(out). Its function is as follows. Component of the cytochrome c oxidase, the last enzyme in the mitochondrial electron transport chain which drives oxidative phosphorylation. The respiratory chain contains 3 multisubunit complexes succinate dehydrogenase (complex II, CII), ubiquinol-cytochrome c oxidoreductase (cytochrome b-c1 complex, complex III, CIII) and cytochrome c oxidase (complex IV, CIV), that cooperate to transfer electrons derived from NADH and succinate to molecular oxygen, creating an electrochemical gradient over the inner membrane that drives transmembrane transport and the ATP synthase. Cytochrome c oxidase is the component of the respiratory chain that catalyzes the reduction of oxygen to water. Electrons originating from reduced cytochrome c in the intermembrane space (IMS) are transferred via the dinuclear copper A center (CU(A)) of subunit 2 and heme A of subunit 1 to the active site in subunit 1, a binuclear center (BNC) formed by heme A3 and copper B (CU(B)). The BNC reduces molecular oxygen to 2 water molecules using 4 electrons from cytochrome c in the IMS and 4 protons from the mitochondrial matrix. This chain is Cytochrome c oxidase subunit 2 (MT-CO2), found in Lycalopex vetulus (Hoary fox).